A 442-amino-acid polypeptide reads, in one-letter code: tRNA modification GTPase MnmE (442 aa).

Arginine 22, glutamate 79, and lysine 118 together coordinate (6S)-5-formyl-5,6,7,8-tetrahydrofolate. The TrmE-type G domain maps to 215-365 (EIPIAIVGRP…LEKAILFEYQ (151 aa)). Asparagine 225 contacts K(+). Residues 225–230 (NVGKSS), 244–250 (TNIEGTT), and 269–272 (DTAG) contribute to the GTP site. Serine 229 provides a ligand contact to Mg(2+). 3 residues coordinate K(+): threonine 244, isoleucine 246, and threonine 249. Threonine 250 contributes to the Mg(2+) binding site. Position 442 (lysine 442) interacts with (6S)-5-formyl-5,6,7,8-tetrahydrofolate.

This sequence belongs to the TRAFAC class TrmE-Era-EngA-EngB-Septin-like GTPase superfamily. TrmE GTPase family. Homodimer. Heterotetramer of two MnmE and two MnmG subunits. Requires K(+) as cofactor.

Its subcellular location is the cytoplasm. Its function is as follows. Exhibits a very high intrinsic GTPase hydrolysis rate. Involved in the addition of a carboxymethylaminomethyl (cmnm) group at the wobble position (U34) of certain tRNAs, forming tRNA-cmnm(5)s(2)U34. The chain is tRNA modification GTPase MnmE from Mycoplasmopsis pulmonis (strain UAB CTIP) (Mycoplasma pulmonis).